We begin with the raw amino-acid sequence, 324 residues long: Phospho-N-acetylmuramoyl-pentapeptide-transferase (324 aa).

Helical transmembrane passes span 9–29 (TFAVAFIITVIGVPLFIPFLV), 54–74 (MGAVVFITAMLISFLIFSFIG), 77–97 (VSAATWLLFIALALFGALGFL), 117–137 (FLGQVAISILFYLVYHFSDFA), 147–167 (IEVDLGWFFVIFILFWLVGFS), 176–196 (LDGLVSGLSVIAFSAFGVIAF), 201–221 (MDVAIFCFAIVGGMLGFLLFN), 227–247 (IFMGDTGSLALGGSIAAVSIL), 253–273 (LLLLIGIIFVIETASVILQVF), and 304–324 (VLTFWGIGLVGAVISVCVVIF).

It belongs to the glycosyltransferase 4 family. MraY subfamily. The cofactor is Mg(2+).

Its subcellular location is the cell membrane. It carries out the reaction UDP-N-acetyl-alpha-D-muramoyl-L-alanyl-gamma-D-glutamyl-meso-2,6-diaminopimeloyl-D-alanyl-D-alanine + di-trans,octa-cis-undecaprenyl phosphate = di-trans,octa-cis-undecaprenyl diphospho-N-acetyl-alpha-D-muramoyl-L-alanyl-D-glutamyl-meso-2,6-diaminopimeloyl-D-alanyl-D-alanine + UMP. Its pathway is cell wall biogenesis; peptidoglycan biosynthesis. Its function is as follows. Catalyzes the initial step of the lipid cycle reactions in the biosynthesis of the cell wall peptidoglycan: transfers peptidoglycan precursor phospho-MurNAc-pentapeptide from UDP-MurNAc-pentapeptide onto the lipid carrier undecaprenyl phosphate, yielding undecaprenyl-pyrophosphoryl-MurNAc-pentapeptide, known as lipid I. This Listeria welshimeri serovar 6b (strain ATCC 35897 / DSM 20650 / CCUG 15529 / CIP 8149 / NCTC 11857 / SLCC 5334 / V8) protein is Phospho-N-acetylmuramoyl-pentapeptide-transferase.